We begin with the raw amino-acid sequence, 590 residues long: Multidrug resistance ABC transporter ATP-binding and permease protein (590 aa).

6 helical membrane-spanning segments follow: residues 35–55 (YLFFVIGIVAGIIGTLIQLQV), 79–99 (IALYIGSAAVSAIAAIVLGIF), 150–170 (IPQAFTSILLLVGSIIFMLQM), 176–196 (LAMIIAVPIVMLIMFPIMTFG), 261–281 (VMMLSMMLMIFGLLAYGIYLI), and 292–312 (LGMMMYLMNLIGVVPTVATFF). The ABC transmembrane type-1 domain maps to 38-317 (FVIGIVAGII…VATFFTELAK (280 aa)). The 236-residue stretch at 349-584 (LSAHHVDFAY…HPLYAKYVSE (236 aa)) folds into the ABC transporter domain. 382-389 (GPSGGGKS) is an ATP binding site.

Belongs to the ABC transporter superfamily. Multidrug exporter LmrA (TC 3.A.1.117.1) family. As to quaternary structure, homodimer.

Its subcellular location is the cell membrane. The catalysed reaction is ATP + H2O + xenobioticSide 1 = ADP + phosphate + xenobioticSide 2.. Efflux transporter for a variety of amphiphilic cationic compounds, including antibiotics. The sequence is that of Multidrug resistance ABC transporter ATP-binding and permease protein (lmrA) from Lactococcus lactis subsp. cremoris (strain MG1363).